Consider the following 578-residue polypeptide: Proline--tRNA ligase (578 aa).

This sequence belongs to the class-II aminoacyl-tRNA synthetase family. ProS type 1 subfamily. Homodimer.

It is found in the cytoplasm. The enzyme catalyses tRNA(Pro) + L-proline + ATP = L-prolyl-tRNA(Pro) + AMP + diphosphate. Its function is as follows. Catalyzes the attachment of proline to tRNA(Pro) in a two-step reaction: proline is first activated by ATP to form Pro-AMP and then transferred to the acceptor end of tRNA(Pro). As ProRS can inadvertently accommodate and process non-cognate amino acids such as alanine and cysteine, to avoid such errors it has two additional distinct editing activities against alanine. One activity is designated as 'pretransfer' editing and involves the tRNA(Pro)-independent hydrolysis of activated Ala-AMP. The other activity is designated 'posttransfer' editing and involves deacylation of mischarged Ala-tRNA(Pro). The misacylated Cys-tRNA(Pro) is not edited by ProRS. The sequence is that of Proline--tRNA ligase from Burkholderia pseudomallei (strain K96243).